Here is a 159-residue protein sequence, read N- to C-terminus: Ribosomal RNA large subunit methyltransferase H (159 aa).

S-adenosyl-L-methionine-binding positions include Leu76, Gly108, and 127–132 (FSRMTF).

The protein belongs to the RNA methyltransferase RlmH family. As to quaternary structure, homodimer.

The protein resides in the cytoplasm. The enzyme catalyses pseudouridine(1915) in 23S rRNA + S-adenosyl-L-methionine = N(3)-methylpseudouridine(1915) in 23S rRNA + S-adenosyl-L-homocysteine + H(+). Specifically methylates the pseudouridine at position 1915 (m3Psi1915) in 23S rRNA. This chain is Ribosomal RNA large subunit methyltransferase H, found in Bacillus licheniformis (strain ATCC 14580 / DSM 13 / JCM 2505 / CCUG 7422 / NBRC 12200 / NCIMB 9375 / NCTC 10341 / NRRL NRS-1264 / Gibson 46).